The following is a 60-amino-acid chain: KLVALIPNDQLRSILKAVVHKVAKTQFGCPAYEGYCNDHCNDIERKDGECHGFKCKCAKD.

The region spanning 26 to 60 (QFGCPAYEGYCNDHCNDIERKDGECHGFKCKCAKD) is the BetaSPN-type CS-alpha/beta domain. Intrachain disulfides connect Cys-29/Cys-50, Cys-36/Cys-55, and Cys-40/Cys-57.

It belongs to the long chain scorpion toxin family. Class 1 subfamily. In terms of tissue distribution, expressed by the venom gland.

The protein resides in the secreted. In terms of biological role, inhibits voltage-gated potassium channels Kv1.1/KCNA1, Kv1.2/KCNA2, and Kv1.3/KCNA3. Functionally, does not induce hemolytic activity, lactate dehydrogenase (LDH) release from mast cells, mast cell degranulation, and antimicrobial effects. In vivo, injection into mice causes moderate edema formation, but induces very weak or no change in nociceptive sensibility. It also reduces mice locomotion, suggesting an increase in anxiety, but causes no alteration in rearing (standing on hind limbs). The protein is Potassium channel toxin Tst-beta-KTx of Tityus stigmurus (Brazilian scorpion).